Here is a 366-residue protein sequence, read N- to C-terminus: Glutamate 5-kinase (366 aa).

Lysine 17 contacts ATP. Substrate is bound by residues serine 57, aspartate 144, and asparagine 156. ATP is bound by residues 176-177 and 216-222; these read SD and TGGMASK. A PUA domain is found at 278–352; that stretch reads QGILHIDEGA…GKSTQELPAE (75 aa).

This sequence belongs to the glutamate 5-kinase family.

It is found in the cytoplasm. It catalyses the reaction L-glutamate + ATP = L-glutamyl 5-phosphate + ADP. It participates in amino-acid biosynthesis; L-proline biosynthesis; L-glutamate 5-semialdehyde from L-glutamate: step 1/2. Functionally, catalyzes the transfer of a phosphate group to glutamate to form L-glutamate 5-phosphate. The chain is Glutamate 5-kinase from Rhodococcus opacus (strain B4).